A 535-amino-acid polypeptide reads, in one-letter code: T-complex protein 1 subunit epsilon (535 aa).

Belongs to the TCP-1 chaperonin family. As to quaternary structure, heterooligomeric complex of about 850 to 900 kDa that forms two stacked rings, 12 to 16 nm in diameter.

It localises to the cytoplasm. In terms of biological role, molecular chaperone; assists the folding of proteins upon ATP hydrolysis. Known to play a role, in vitro, in the folding of actin and tubulin. This chain is T-complex protein 1 subunit epsilon, found in Avena sativa (Oat).